A 292-amino-acid polypeptide reads, in one-letter code: Ribosomal protein L11 methyltransferase (292 aa).

S-adenosyl-L-methionine contacts are provided by Thr144, Gly165, Asp187, and Asn229.

This sequence belongs to the methyltransferase superfamily. PrmA family.

The protein resides in the cytoplasm. It catalyses the reaction L-lysyl-[protein] + 3 S-adenosyl-L-methionine = N(6),N(6),N(6)-trimethyl-L-lysyl-[protein] + 3 S-adenosyl-L-homocysteine + 3 H(+). In terms of biological role, methylates ribosomal protein L11. This Pseudomonas savastanoi pv. phaseolicola (strain 1448A / Race 6) (Pseudomonas syringae pv. phaseolicola (strain 1448A / Race 6)) protein is Ribosomal protein L11 methyltransferase.